A 380-amino-acid polypeptide reads, in one-letter code: Cytochrome b (380 aa).

The next 4 membrane-spanning stretches (helical) occupy residues 34 to 54 (FGSL…ILAM), 78 to 100 (WLMR…AHMG), 113 to 133 (TWNI…MGYV), and 179 to 199 (FFAF…VHLL). 2 residues coordinate heme b: H84 and H98. Positions 183 and 197 each coordinate heme b. H202 serves as a coordination point for a ubiquinone. 4 consecutive transmembrane segments (helical) span residues 225–245 (FSWK…TITL), 289–309 (LGGV…MLTH), 324–344 (VIFW…AAPV), and 349–369 (ITLG…APMI).

Belongs to the cytochrome b family. In terms of assembly, the main subunits of complex b-c1 are: cytochrome b, cytochrome c1 and the Rieske protein. The cofactor is heme b.

Its subcellular location is the mitochondrion inner membrane. Component of the ubiquinol-cytochrome c reductase complex (complex III or cytochrome b-c1 complex) that is part of the mitochondrial respiratory chain. The b-c1 complex mediates electron transfer from ubiquinol to cytochrome c. Contributes to the generation of a proton gradient across the mitochondrial membrane that is then used for ATP synthesis. The protein is Cytochrome b (mt:Cyt-b) of Xenoturbella bocki (Marine worm).